The following is a 378-amino-acid chain: Pseudouridine kinase (378 aa).

Pseudouridine is bound by residues D12, T26, G37 to N41, V38, N137, and K166. Mg(2+) is bound by residues S181 and T237. The ATP site is built by T237, G239, G242, T298, L306, and G310. Residue D311 participates in pseudouridine binding.

The protein belongs to the carbohydrate kinase PfkB family. As to quaternary structure, forms homodimers.

It is found in the peroxisome. It carries out the reaction pseudouridine + ATP = psi-UMP + ADP + H(+). In terms of biological role, catalyzes the phosphorylation of pseudouridine to pseudouridine 5'-phosphate (PsiMP). Catalyzes the first step in a pseudouridine degradation pathway. Acts together with the pseudouridine 5'-phosphate glycosidase PUMY in the peroxisome to prevent toxic pseudouridine monophosphate accumulation. This chain is Pseudouridine kinase, found in Arabidopsis thaliana (Mouse-ear cress).